Consider the following 305-residue polypeptide: DNA-directed RNA polymerase 35 kDa subunit (305 aa).

It belongs to the poxviridae DNA-directed RNA polymerase 35 kDa subunit family. In terms of assembly, the DNA-dependent RNA polymerase used for intermediate and late genes expression consists of eight subunits 147 kDa, 133 kDa, 35 kDa, 30 kDa, 22 kDa, 19 kDa, 18 kDa and 7 kDa totalling more than 500 kDa in mass. The same holoenzyme, with the addition of the transcription-specificity factor RAP94, is used for early gene expression.

It is found in the virion. The catalysed reaction is RNA(n) + a ribonucleoside 5'-triphosphate = RNA(n+1) + diphosphate. Part of the DNA-dependent RNA polymerase which catalyzes the transcription of viral DNA into RNA using the four ribonucleoside triphosphates as substrates. Responsible for the transcription of early, intermediate and late genes. DNA-dependent RNA polymerase associates with the early transcription factor (ETF), itself composed of D6 and A7, thereby allowing the early genes transcription. Late transcription, and probably also intermediate transcription, require newly synthesized RNA polymerase. The sequence is that of DNA-directed RNA polymerase 35 kDa subunit (OPG156) from Homo sapiens (Human).